The primary structure comprises 511 residues: ATP synthase subunit alpha, mitochondrial (511 aa).

Position 171-178 (171-178 (GDRQTGKT)) interacts with ATP.

The protein belongs to the ATPase alpha/beta chains family. As to quaternary structure, F-type ATPases have 2 components, CF(1) - the catalytic core - and CF(0) - the membrane proton channel. CF(1) has five subunits: alpha(3), beta(3), gamma(1), delta(1), epsilon(1). CF(0) has three main subunits: a, b and c.

It is found in the mitochondrion. The protein localises to the mitochondrion inner membrane. Functionally, mitochondrial membrane ATP synthase (F(1)F(0) ATP synthase or Complex V) produces ATP from ADP in the presence of a proton gradient across the membrane which is generated by electron transport complexes of the respiratory chain. F-type ATPases consist of two structural domains, F(1) - containing the extramembraneous catalytic core, and F(0) - containing the membrane proton channel, linked together by a central stalk and a peripheral stalk. During catalysis, ATP synthesis in the catalytic domain of F(1) is coupled via a rotary mechanism of the central stalk subunits to proton translocation. Subunits alpha and beta form the catalytic core in F(1). Rotation of the central stalk against the surrounding alpha(3)beta(3) subunits leads to hydrolysis of ATP in three separate catalytic sites on the beta subunits. Subunit alpha does not bear the catalytic high-affinity ATP-binding sites. The polypeptide is ATP synthase subunit alpha, mitochondrial (ATPA) (Oenothera biennis (German evening primrose)).